Here is a 77-residue protein sequence, read N- to C-terminus: Anionic peptide 17.1 (77 aa).

The N-terminal stretch at 1–24 (MASKTVLVLLLVSVLVSTFCTAKA) is a signal peptide.

Belongs to the non-disulfide-bridged peptide (NDBP) superfamily. Long chain multifunctional peptide (group 2) family. Expressed by the venom gland.

It is found in the secreted. This Lychas mucronatus (Chinese swimming scorpion) protein is Anionic peptide 17.1.